The chain runs to 228 residues: Uracil-DNA glycosylase (228 aa).

Asp-65 serves as the catalytic Proton acceptor.

The protein belongs to the uracil-DNA glycosylase (UDG) superfamily. UNG family.

The protein resides in the cytoplasm. It carries out the reaction Hydrolyzes single-stranded DNA or mismatched double-stranded DNA and polynucleotides, releasing free uracil.. In terms of biological role, excises uracil residues from the DNA which can arise as a result of misincorporation of dUMP residues by DNA polymerase or due to deamination of cytosine. This chain is Uracil-DNA glycosylase, found in Lacticaseibacillus paracasei (strain ATCC 334 / BCRC 17002 / CCUG 31169 / CIP 107868 / KCTC 3260 / NRRL B-441) (Lactobacillus paracasei).